The following is a 544-amino-acid chain: Chromatin assembly factor 1 subunit A (544 aa).

Over residues 1 to 22 the composition is skewed to polar residues; it reads MNSESVDSDVAASTSNKGNELC. Disordered stretches follow at residues 1 to 52, 67 to 117, and 138 to 160; these read MNSE…EADE, IYNG…REQE, and QEQQRRKEERDQKLREKEEAQRL. Low complexity predominate over residues 23-35; it reads SSSTDITSLSVSS. A compositionally biased stretch (polar residues) spans 36-47; sequence PNESVIHSSHSA. The interval 56–170 is interaction with DNA and pcn1/PCNA; sequence KLSYEGNRKK…RQEQILNKER (115 aa). Basic and acidic residues predominate over residues 74-117; it reads AGKEKKLQKQRAQEERIRQKEAERLKREKERQQREQEKKLREQE. A coiled-coil region spans residues 76 to 176; sequence KEKKLQKQRA…NKERQQLKLN (101 aa). Positions 172-179 match the PCNA-interaction protein (PIP box) motif; it reads QLKLNNFF. The segment at 325-396 is interaction with histones H3/H4; it reads SNVLLNPWLE…DKDSVNASNT (72 aa). Over residues 351-388 the composition is skewed to acidic residues; the sequence is DEEDDGEDLESEDEEVDNSDDIVEDGDNAFVDDEDDDK. The segment at 351–400 is disordered; it reads DEEDDGEDLESEDEEVDNSDDIVEDGDNAFVDDEDDDKDSVNASNTHRSS.

The protein belongs to the RLF2 family. As to quaternary structure, component of chromatin assembly factor 1 (CAF-1), composed of pcf1, pcf2 and pcf3. Interacts (via PIP motif) with pcn1/PCNA; the interaction is direct and occurs during S-phase. Interacts with swi6 at the G1/S-phase transition and early S-phase, but not in the G2 phase. The CAF-1 complex interacts with histone H3/H4 dimers.

It localises to the nucleus. In terms of biological role, acts as a component of the histone chaperone complex chromatin assembly factor 1 (CAF-1), which assembles histone octamers onto DNA during replication and repair. CAF-1 performs the first step of the nucleosome assembly process, bringing newly synthesized histones H3 and H4 to replicating DNA; histones H2A/H2B can bind to this chromatin precursor subsequent to DNA replication to complete the histone octamer. Plays a role in the maintenance of heterochromatin. In Schizosaccharomyces pombe (strain 972 / ATCC 24843) (Fission yeast), this protein is Chromatin assembly factor 1 subunit A.